The following is a 65-amino-acid chain: Small ribosomal subunit protein bS21 (65 aa).

It belongs to the bacterial ribosomal protein bS21 family.

The protein is Small ribosomal subunit protein bS21 of Acidobacterium capsulatum (strain ATCC 51196 / DSM 11244 / BCRC 80197 / JCM 7670 / NBRC 15755 / NCIMB 13165 / 161).